Here is a 748-residue protein sequence, read N- to C-terminus: Adenosylcobalamin-dependent ribonucleoside-triphosphate reductase (748 aa).

C123 and C426 are disulfide-bonded. Residues 151–162 (SMPYSFMFDELM) form an effector region-1 region. Residues 172–320 (TKDNIAKLPP…IGNLIGKTVV (149 aa)) form an effector region-2 region. Active-site residues include C415 and E417. Positions 572 to 633 (FHYAGYLIQR…DPAFASAGTV (62 aa)) are adenosylcobalamin-binding-1. The adenosylcobalamin-binding-2 stretch occupies residues 692–733 (FKQAPKEPIDVKTYKQKCAAIHGSVAAVFAVQNADHDQKDLE).

It belongs to the class II ribonucleoside-triphosphate reductase family. As to quaternary structure, monomer. Adenosylcob(III)alamin serves as cofactor.

The catalysed reaction is a 2'-deoxyribonucleoside 5'-triphosphate + [thioredoxin]-disulfide + H2O = a ribonucleoside 5'-triphosphate + [thioredoxin]-dithiol. With respect to regulation, allosterically regulated by ATP and dNTP. The polypeptide is Adenosylcobalamin-dependent ribonucleoside-triphosphate reductase (rtpR) (Lacticaseibacillus paracasei (strain ATCC 334 / BCRC 17002 / CCUG 31169 / CIP 107868 / KCTC 3260 / NRRL B-441) (Lactobacillus paracasei)).